Here is a 428-residue protein sequence, read N- to C-terminus: Enolase (428 aa).

Position 163 (Gln163) interacts with (2R)-2-phosphoglycerate. Glu205 serves as the catalytic Proton donor. The Mg(2+) site is built by Asp242, Glu283, and Asp310. (2R)-2-phosphoglycerate contacts are provided by Lys335, Arg364, Ser365, and Lys386. Lys335 serves as the catalytic Proton acceptor.

This sequence belongs to the enolase family. The cofactor is Mg(2+).

It is found in the cytoplasm. The protein resides in the secreted. The protein localises to the cell surface. The catalysed reaction is (2R)-2-phosphoglycerate = phosphoenolpyruvate + H2O. Its pathway is carbohydrate degradation; glycolysis; pyruvate from D-glyceraldehyde 3-phosphate: step 4/5. Catalyzes the reversible conversion of 2-phosphoglycerate (2-PG) into phosphoenolpyruvate (PEP). It is essential for the degradation of carbohydrates via glycolysis. In Streptomyces avermitilis (strain ATCC 31267 / DSM 46492 / JCM 5070 / NBRC 14893 / NCIMB 12804 / NRRL 8165 / MA-4680), this protein is Enolase.